The primary structure comprises 97 residues: Apolipoprotein C-II (97 aa).

A signal peptide spans 1–22 (MGSRFFLALFLVLLVLGNEVQG). Positions 63 to 71 (SVDEKLRDM) are lipid binding. The interval 75-97 (SSAAMSTYAGIFTDQLLTLLKGE) is lipoprotein lipase cofactor.

It belongs to the apolipoprotein C2 family. Proapolipoprotein C-II is synthesized as a sialic acid containing glycoprotein which is subsequently desialylated prior to its proteolytic processing. In terms of processing, proapolipoprotein C-II, the major form found in plasma undergoes proteolytic cleavage of its N-terminal hexapeptide to generate the mature form apolipoprotein C-II, which occurs as the minor form in plasma.

The protein resides in the secreted. Functionally, component of chylomicrons, very low-density lipoproteins (VLDL), low-density lipoproteins (LDL), and high-density lipoproteins (HDL) in plasma. Plays an important role in lipoprotein metabolism as an activator of lipoprotein lipase. This is Apolipoprotein C-II (Apoc2) from Grammomys surdaster (African woodland thicket rat).